The chain runs to 201 residues: Ras-related protein Rab-9A (201 aa).

Ala2 carries the post-translational modification N-acetylalanine. Positions 17, 18, 19, 20, 21, 22, 34, 38, and 39 each coordinate GTP. Residue Ser21 coordinates Mg(2+). The Switch 1 signature appears at 31-42; the sequence is KFDSQLFHTIGV. Ser34 bears the Phosphoserine mark. Positions 39 and 62 each coordinate Mg(2+). A Switch 2 motif is present at residues 64 to 78; it reads AGQERFRSLRTPFYR. Residues Gly65, Asn124, Lys125, Asp127, and Lys156 each contribute to the GTP site. Ser179 carries the post-translational modification Phosphoserine. Thr187 bears the Phosphothreonine mark. Residues Cys200 and Cys201 are each lipidated (S-geranylgeranyl cysteine).

It belongs to the small GTPase superfamily. Rab family. As to quaternary structure, interacts (preferentially in its GTP-bound form) with GCC2 (via its GRIP domain). Interacts (GTP-bound form) with SGSM1; the GDP-bound form has much lower affinity for SGSM1. Interacts with SGSM2. The GTP-bound form but not the GDP-bound form interacts with HPS4 and the BLOC-3 complex (heterodimer of HPS1 and HPS4) but does not interact with HPS1 alone. Interacts (GTP-bound form) with NDE1; two RAB9A-GTP molecules lie on the opposite sides of the NDE1 homodimer; the interaction leads to RAB9A-dynein motor tethering. Interacts (GTP-bound form) with NDEL1. Mg(2+) serves as cofactor.

It localises to the cell membrane. The protein resides in the endoplasmic reticulum membrane. The protein localises to the golgi apparatus membrane. It is found in the late endosome. Its subcellular location is the cytoplasmic vesicle. It localises to the phagosome membrane. The protein resides in the phagosome. The protein localises to the cytoplasmic vesicle membrane. It is found in the melanosome. It catalyses the reaction GTP + H2O = GDP + phosphate + H(+). With respect to regulation, regulated by guanine nucleotide exchange factors (GEFs) which promote the exchange of bound GDP for free GTP. Regulated by GTPase activating proteins (GAPs) which increase the GTP hydrolysis activity. Inhibited by GDP dissociation inhibitors (GDIs). The small GTPases Rab are key regulators of intracellular membrane trafficking, from the formation of transport vesicles to their fusion with membranes. Rabs cycle between an inactive GDP-bound form and an active GTP-bound form that is able to recruit to membranes different sets of downstream effectors directly responsible for vesicle formation, movement, tethering and fusion. RAB9A is involved in the transport of proteins between the endosomes and the trans-Golgi network (TGN). Specifically uses NDE1/NDEL1 as an effector to interact with the dynein motor complex in order to control retrograde trafficking of RAB9-associated late endosomes to the TGN. Involved in the recruitment of SGSM2 to melanosomes and is required for the proper trafficking of melanogenic enzymes TYR, TYRP1 and DCT/TYRP2 to melanosomes in melanocytes. The protein is Ras-related protein Rab-9A of Rattus norvegicus (Rat).